Here is a 440-residue protein sequence, read N- to C-terminus: Proton extrusion protein PxcA (440 aa).

Transmembrane regions (helical) follow at residues 222–242 (FVLTLIIVPLLAHQLTKTFFL), 316–336 (NAIANIFADIFSLVAFSLVLV), 352–374 (IVYGLSDSAKAFLIILFTDMFVG), and 400–420 (FNFLFIATFPVILDTVFKYWI).

This sequence belongs to the CemA family.

Its subcellular location is the cell inner membrane. In terms of biological role, required for H(+) efflux immediately after light irradiation to form a rapid H(+) concentration gradient across the thylakoid membranes. Together with PxcL, contributes to transient H(+) uptake following dark to light transition. Involved in light-induced Na(+)-dependent proton extrusion. Also seems to be involved in CO(2) transport. The polypeptide is Proton extrusion protein PxcA (Synechocystis sp. (strain ATCC 27184 / PCC 6803 / Kazusa)).